The sequence spans 198 residues: Putative nitroreductase MJ1384 (198 aa).

This sequence belongs to the nitroreductase family. FMN serves as cofactor.

This Methanocaldococcus jannaschii (strain ATCC 43067 / DSM 2661 / JAL-1 / JCM 10045 / NBRC 100440) (Methanococcus jannaschii) protein is Putative nitroreductase MJ1384.